The primary structure comprises 387 residues: Ferrochelatase (387 aa).

Fe cation-binding residues include His196 and Glu277.

Belongs to the ferrochelatase family.

Its subcellular location is the cytoplasm. It carries out the reaction heme b + 2 H(+) = protoporphyrin IX + Fe(2+). It participates in porphyrin-containing compound metabolism; protoheme biosynthesis; protoheme from protoporphyrin-IX: step 1/1. In terms of biological role, catalyzes the ferrous insertion into protoporphyrin IX. This is Ferrochelatase from Cyanothece sp. (strain PCC 7425 / ATCC 29141).